Consider the following 72-residue polypeptide: Galensin (72 aa).

The signal sequence occupies residues 1–22 (MLTLKKSMLLLFFLGLVSVSLA). The propeptide occupies 23-48 (DDKREDEAEEGEDKRAAEEERNVEKR). Residue Phe-71 is modified to Phenylalanine amide.

This sequence belongs to the frog skin active peptide (FSAP) family. Brevinin subfamily. As to quaternary structure, homodimer; disulfide-linked. In terms of tissue distribution, expressed by the skin glands.

The protein resides in the secreted. Antibacterial activity against the Gram-positive bacterium M.luteus and the Gram-negative bacterium E.coli. In Kassina senegalensis (Senegal running frog), this protein is Galensin.